Here is a 551-residue protein sequence, read N- to C-terminus: Dihydroxy-acid dehydratase (551 aa).

Cysteine 52 is a [2Fe-2S] cluster binding site. Residue aspartate 84 coordinates Mg(2+). Cysteine 125 is a [2Fe-2S] cluster binding site. Mg(2+) is bound by residues aspartate 126 and lysine 127. Lysine 127 carries the N6-carboxylysine modification. Cysteine 197 contributes to the [2Fe-2S] cluster binding site. Glutamate 448 lines the Mg(2+) pocket. The Proton acceptor role is filled by serine 474.

This sequence belongs to the IlvD/Edd family. Homodimer. Requires [2Fe-2S] cluster as cofactor. Mg(2+) is required as a cofactor.

The enzyme catalyses (2R)-2,3-dihydroxy-3-methylbutanoate = 3-methyl-2-oxobutanoate + H2O. The catalysed reaction is (2R,3R)-2,3-dihydroxy-3-methylpentanoate = (S)-3-methyl-2-oxopentanoate + H2O. The protein operates within amino-acid biosynthesis; L-isoleucine biosynthesis; L-isoleucine from 2-oxobutanoate: step 3/4. It participates in amino-acid biosynthesis; L-valine biosynthesis; L-valine from pyruvate: step 3/4. In terms of biological role, functions in the biosynthesis of branched-chain amino acids. Catalyzes the dehydration of (2R,3R)-2,3-dihydroxy-3-methylpentanoate (2,3-dihydroxy-3-methylvalerate) into 2-oxo-3-methylpentanoate (2-oxo-3-methylvalerate) and of (2R)-2,3-dihydroxy-3-methylbutanoate (2,3-dihydroxyisovalerate) into 2-oxo-3-methylbutanoate (2-oxoisovalerate), the penultimate precursor to L-isoleucine and L-valine, respectively. The protein is Dihydroxy-acid dehydratase of Francisella tularensis subsp. tularensis (strain FSC 198).